Consider the following 137-residue polypeptide: Cellular retinoic acid-binding protein 1 (137 aa).

The short motif at 21–31 (KALGVNAMLRK) is the Nuclear localization signal element. 132–134 (RIY) is a binding site for all-trans-retinoate.

The protein belongs to the calycin superfamily. Fatty-acid binding protein (FABP) family.

It localises to the cytoplasm. In terms of biological role, cytosolic CRABPs may regulate the access of retinoic acid to the nuclear retinoic acid receptors. The chain is Cellular retinoic acid-binding protein 1 (crabp1) from Hippocampus comes (Tiger tail seahorse).